The chain runs to 369 residues: Quinolinate synthase (369 aa).

Iminosuccinate is bound by residues His47 and Ser64. [4Fe-4S] cluster is bound at residue Cys111. Residues 142 to 144 (YVN) and Ser163 contribute to the iminosuccinate site. Cys231 provides a ligand contact to [4Fe-4S] cluster. Residues 257–259 (HPE) and Thr274 contribute to the iminosuccinate site. [4Fe-4S] cluster is bound at residue Cys321.

Belongs to the quinolinate synthase family. Type 3 subfamily. [4Fe-4S] cluster serves as cofactor.

It localises to the cytoplasm. The catalysed reaction is iminosuccinate + dihydroxyacetone phosphate = quinolinate + phosphate + 2 H2O + H(+). It participates in cofactor biosynthesis; NAD(+) biosynthesis; quinolinate from iminoaspartate: step 1/1. In terms of biological role, catalyzes the condensation of iminoaspartate with dihydroxyacetone phosphate to form quinolinate. This is Quinolinate synthase from Bacillus licheniformis (strain ATCC 14580 / DSM 13 / JCM 2505 / CCUG 7422 / NBRC 12200 / NCIMB 9375 / NCTC 10341 / NRRL NRS-1264 / Gibson 46).